The following is a 179-amino-acid chain: uncharacterized protein (179 aa).

Residues Gln160–Val179 form a disordered region. The segment covering Asn165 to Val179 has biased composition (polar residues).

The protein belongs to the Dps family.

This is an uncharacterized protein from Anabaena variabilis.